Here is a 360-residue protein sequence, read N- to C-terminus: MDPEETSVYLDYYYATSPNPDIRETHSHVPYTSVFLPVFYTAVFLTGVLGNLVLMGALHFKPGSRRLIDIFIINLAASDFIFLVTLPLWVDKEASLGLWRTGSFLCKGSSYMISVNMHCSVFLLTCMSVDRYLAIVCPVVSRKFRRTDCAYVVCASIWFISCLLGLPTLLSRELTLIDDKPYCAEKKATPLKLIWSLVALIFTFFVPLLSIVTCYCCIARKLCAHYQQSGKHNKKLKKSIKIIFIVVAAFLVSWLPFNTFKLLAIVSGLQQERYFPSAMLQLGMEVSGPLAFANSCVNPFIYYIFDSYIRRAIVHCLCPCLKNYDFGSSTETSDSHLTKALSTFIHAEDFTRRRKRSVSL.

Topologically, residues 1–33 (MDPEETSVYLDYYYATSPNPDIRETHSHVPYTS) are extracellular. The helical transmembrane segment at 34–54 (VFLPVFYTAVFLTGVLGNLVL) threads the bilayer. The Cytoplasmic portion of the chain corresponds to 55-69 (MGALHFKPGSRRLID). Residues 70 to 90 (IFIINLAASDFIFLVTLPLWV) traverse the membrane as a helical segment. The Extracellular portion of the chain corresponds to 91–120 (DKEASLGLWRTGSFLCKGSSYMISVNMHCS). The helical transmembrane segment at 121–141 (VFLLTCMSVDRYLAIVCPVVS) threads the bilayer. The Cytoplasmic segment spans residues 142–149 (RKFRRTDC). Residues 150-170 (AYVVCASIWFISCLLGLPTLL) traverse the membrane as a helical segment. The Extracellular portion of the chain corresponds to 171–192 (SRELTLIDDKPYCAEKKATPLK). A helical membrane pass occupies residues 193 to 213 (LIWSLVALIFTFFVPLLSIVT). At 214 to 239 (CYCCIARKLCAHYQQSGKHNKKLKKS) the chain is on the cytoplasmic side. Residues 240–260 (IKIIFIVVAAFLVSWLPFNTF) traverse the membrane as a helical segment. Over 261–284 (KLLAIVSGLQQERYFPSAMLQLGM) the chain is Extracellular. A helical transmembrane segment spans residues 285–305 (EVSGPLAFANSCVNPFIYYIF). At 306-360 (DSYIRRAIVHCLCPCLKNYDFGSSTETSDSHLTKALSTFIHAEDFTRRRKRSVSL) the chain is on the cytoplasmic side. The residue at position 359 (S359) is a Phosphoserine.

Belongs to the G-protein coupled receptor 1 family. In terms of assembly, interacts with adapter YWHAE; this interaction promotes ER-to-Golgi transport of GPR15. Phosphorylation is necessary for YWHAE binding and efficient surface expression. Post-translationally, O-glycosylated. Sialylated O-glycans in the N-terminal tail inhibits binding of GPR15LG. In terms of processing, sulfation is required for efficient binding of GPR15LG.

It localises to the cell membrane. In terms of biological role, g protein-coupled receptor that plays an important role in immune homeostasis. Acts via its natural ligand GPR15LG, a chemokine-like polypeptide strongly expressed in gastrointestinal tissues. GPR15-GPR15LG signaling axis regulates intestinal homeostasis and inflammation through the migration of immune cells. Controls thereby the specific homing of T-cells, particularly FOXP3+ regulatory T-cells (Tregs), to the large intestine lamina propria. Also required for skin localization of thymus-derived dendritic epidermal T-cells. Plays an important role in mediating cytoprotective function as well as angiogenesis of thrombomodulin. Mechanistically, preferentially signals through the Gi/o pathway to inhibit adenylate cyclase activity and activate a phosphatidylinositol-calcium second messenger system that regulates the release of Ca(2+) ions from intracellular stores. The protein is G-protein coupled receptor 15 (GPR15) of Macaca mulatta (Rhesus macaque).